Reading from the N-terminus, the 290-residue chain is Acetylglutamate kinase (290 aa).

Residues 60–61 (GG), Arg82, and Asn187 each bind substrate.

The protein belongs to the acetylglutamate kinase family. ArgB subfamily.

The protein resides in the cytoplasm. It catalyses the reaction N-acetyl-L-glutamate + ATP = N-acetyl-L-glutamyl 5-phosphate + ADP. It functions in the pathway amino-acid biosynthesis; L-arginine biosynthesis; N(2)-acetyl-L-ornithine from L-glutamate: step 2/4. Catalyzes the ATP-dependent phosphorylation of N-acetyl-L-glutamate. The sequence is that of Acetylglutamate kinase from Marinobacter nauticus (strain ATCC 700491 / DSM 11845 / VT8) (Marinobacter aquaeolei).